Here is a 165-residue protein sequence, read N- to C-terminus: Phosphopantetheine adenylyltransferase (165 aa).

Thr10 contacts substrate. Residues 10–11 (TF) and His18 contribute to the ATP site. Lys42, Leu75, and Arg89 together coordinate substrate. Residues 90–92 (GVR), Glu100, and 125–131 (VSFISSS) contribute to the ATP site.

The protein belongs to the bacterial CoaD family. As to quaternary structure, homohexamer. Mg(2+) is required as a cofactor.

The protein localises to the cytoplasm. It carries out the reaction (R)-4'-phosphopantetheine + ATP + H(+) = 3'-dephospho-CoA + diphosphate. It participates in cofactor biosynthesis; coenzyme A biosynthesis; CoA from (R)-pantothenate: step 4/5. Reversibly transfers an adenylyl group from ATP to 4'-phosphopantetheine, yielding dephospho-CoA (dPCoA) and pyrophosphate. The polypeptide is Phosphopantetheine adenylyltransferase (Buchnera aphidicola subsp. Acyrthosiphon pisum (strain 5A)).